The following is a 177-amino-acid chain: Deoxyuridine 5'-triphosphate nucleotidohydrolase (177 aa).

Substrate-binding positions include 83-85 (RSG), N96, 100-102 (TID), and K110. The segment covering 150–163 (DLTSSQTDLSNQPN) has biased composition (polar residues). The interval 150–177 (DLTSSQTDLSNQPNTGRGTGGFGSTGQK) is disordered. Positions 166–177 (RGTGGFGSTGQK) are enriched in gly residues.

Belongs to the dUTPase family. Requires Mg(2+) as cofactor.

The catalysed reaction is dUTP + H2O = dUMP + diphosphate + H(+). It functions in the pathway pyrimidine metabolism; dUMP biosynthesis; dUMP from dCTP (dUTP route): step 2/2. This enzyme is involved in nucleotide metabolism: it produces dUMP, the immediate precursor of thymidine nucleotides and it decreases the intracellular concentration of dUTP so that uracil cannot be incorporated into DNA. This chain is Deoxyuridine 5'-triphosphate nucleotidohydrolase, found in Bartonella bacilliformis (strain ATCC 35685 / KC583 / Herrer 020/F12,63).